Reading from the N-terminus, the 407-residue chain is Keratin, type I cuticular Ha2 (407 aa).

The segment at 1-55 is head; sequence MPSVCMPTTYRPASCLSKTYLSSSCQPSNRRPTGCISSSMGTYGLFCEGAFNGNE. Residues 55 to 366 form the IF rod domain; sequence EKETMQVLND…GLLESEDSKL (312 aa). The segment at 56 to 90 is coil 1A; sequence KETMQVLNDRLANYLEKVRQLEKENAELEGKIQDV. Residues 91-101 are linker 1; the sequence is YQGQVLTMCPD. Positions 102-202 are coil 1B; the sequence is YQSYFQTIEE…HEEEVGVLRQ (101 aa). Residues 203 to 218 are linker 12; that stretch reads QLGDRLNIEVDAAPPV. The interval 219–362 is coil 2; it reads DLTRMLEEMR…DTYRGLLESE (144 aa). Residues 363 to 407 are tail; that stretch reads DSKLPCNPCSTPSCQPCAPSPGVSRTVCVPHTVCVPCSPCLQTRY.

The protein belongs to the intermediate filament family. As to expression, cuticle of the hair shaft.

In Mus musculus (Mouse), this protein is Keratin, type I cuticular Ha2 (Krt32).